We begin with the raw amino-acid sequence, 217 residues long: Killer cell lectin-like receptor subfamily B member 1F (217 aa).

The Cytoplasmic segment spans residues 1 to 45 (MDTSRVYGNVKTFRSPGHKQASFPSLSTDACRCPHWHHLALKLGC). The LCK-binding motif motif lies at 31 to 34 (CRCP). A helical; Signal-anchor for type II membrane protein transmembrane segment spans residues 46 to 66 (ATLILLLLTLIGLSVFVRFLV). Topologically, residues 67–217 (QKPLIEKCSM…WICQKTLKHV (151 aa)) are extracellular. Positions 101–211 (HRNKCLIISQ…CSSDNHWICQ (111 aa)) constitute a C-type lectin domain. Intrachain disulfides connect cysteine 122/cysteine 210 and cysteine 189/cysteine 202.

Expressed in natural killer cells and a subset of T-cells.

It is found in the membrane. In terms of biological role, binds CLEC2I/Clr-g leading to activation of natural killer cells or stimulation of IL-2 production and proliferation of T-cells in response to antigen stimulation. May contribute to the formation of the immunological synapse between T-cells and antigen-presenting dendritic cells. In Rattus norvegicus (Rat), this protein is Killer cell lectin-like receptor subfamily B member 1F.